The chain runs to 369 residues: Putative 2-aminoethylphosphonate import ATP-binding protein PhnT (369 aa).

Residues 19-250 form the ABC transporter domain; it reads IVLDSLRVAY…PPNRFASEFL (232 aa). 51 to 58 is an ATP binding site; it reads GPSGSGKT.

Belongs to the ABC transporter superfamily. 2-aminoethylphosphonate importer (TC 3.A.1.11.5) family.

Its subcellular location is the cell inner membrane. Its function is as follows. Probably part of the PhnSTUV complex (TC 3.A.1.11.5) involved in 2-aminoethylphosphonate import. Probably responsible for energy coupling to the transport system. This chain is Putative 2-aminoethylphosphonate import ATP-binding protein PhnT (phnT), found in Salmonella choleraesuis (strain SC-B67).